A 127-amino-acid polypeptide reads, in one-letter code: Large ribosomal subunit protein bL17 (127 aa).

Belongs to the bacterial ribosomal protein bL17 family. As to quaternary structure, part of the 50S ribosomal subunit. Contacts protein L32.

This Mannheimia succiniciproducens (strain KCTC 0769BP / MBEL55E) protein is Large ribosomal subunit protein bL17.